Here is a 153-residue protein sequence, read N- to C-terminus: MTLGAATANDPIDSTLASPSRDEQRRQANQAAFSRDLEFLSSLANPYYLNHLALSGALSSPSFKRYLKYLDYFRHPKYVKYLHYPQALHFLDLLQNEEEFRLACRDPAFAGEVMAKQIGHWATWRDPENAAGQEQDEAGEQGEARETTGGQTA.

Disordered regions lie at residues 1-28 and 125-153; these read MTLG…RRQA and RDPE…GQTA.

This sequence belongs to the Mediator complex subunit 31 family. Component of the Mediator complex.

The protein localises to the nucleus. Its function is as follows. Component of the Mediator complex, a coactivator involved in the regulated transcription of nearly all RNA polymerase II-dependent genes. Mediator functions as a bridge to convey information from gene-specific regulatory proteins to the basal RNA polymerase II transcription machinery. Mediator is recruited to promoters by direct interactions with regulatory proteins and serves as a scaffold for the assembly of a functional preinitiation complex with RNA polymerase II and the general transcription factors. In Mycosarcoma maydis (Corn smut fungus), this protein is Mediator of RNA polymerase II transcription subunit 31 (SOH1).